A 396-amino-acid polypeptide reads, in one-letter code: Multidrug efflux protein YfmO (396 aa).

12 helical membrane passes run Val-20–Ile-40, Ser-56–Ile-76, Ile-80–Gly-100, Gly-114–Val-134, Ala-142–Gly-162, Ala-171–Leu-191, Gly-214–Ala-234, Tyr-249–Val-269, Ser-278–Asp-298, Thr-301–Met-321, Ala-339–Ser-359, and Ala-364–Met-384.

This sequence belongs to the major facilitator superfamily.

It localises to the cell membrane. Acts to efflux copper or a copper complex. It is possible that YfmO could contribute to copper resistance. In Bacillus subtilis (strain 168), this protein is Multidrug efflux protein YfmO (yfmO).